The sequence spans 439 residues: Cysteine desulfurase-like protein ustD (439 aa).

The segment at 1 to 25 (MKSVATSSLDDVDKDSVPLGSSING) is disordered. Residues 120–121 (TT), asparagine 206, and 255–257 (SWY) contribute to the pyridoxal 5'-phosphate site. Position 258 is an N6-(pyridoxal phosphate)lysine (lysine 258).

The protein belongs to the class-V pyridoxal-phosphate-dependent aminotransferase family. Pyridoxal 5'-phosphate serves as cofactor.

It participates in mycotoxin biosynthesis. Functionally, cysteine desulfurase-like protein; part of the gene cluster that mediates the biosynthesis of the secondary metabolite ustiloxin B, an antimitotic tetrapeptide. First, ustA is processed by the subtilisin-like endoprotease Kex2 that is outside the ustiloxin B gene cluster, at the C-terminal side of Arg-Lys, after transfer to Golgi apparatus through the endoplasmic reticulum (ER). Cleavage by KEX2 generates 16 peptides YAIG-I to YAIG-XVI. To process the precursor peptide further, at least two peptidases are necessary to cleave the N-terminal and C-terminal sides of the Tyr-Ala-Ile-Gly core peptide which serves as backbone for the synthesis of ustiloxin B, through cyclization and modification of the tyrosine with a non-protein coding amino acid, norvaline. One of the two peptidases must be the serine peptidase ustP; and the other pepdidase is probably ustH. Macrocyclization of the core peptide derived from ustA requires the tyrosinase ustQ, as well as the homologous oxidases ustYa and ustYb, and leads to the production of the first cyclization product N-desmethylustiloxin F. For the formation of N-desmethylustiloxin F, three oxidation steps are required, hydroxylation at the benzylic position, hydroxylation at either the aromatic ring of Tyr or beta-position of Ile, and oxidative cyclization. UstQ may catalyze the oxidation of a phenol moiety, whereas the ustYa and ustYb are most likely responsible for the remaining two-step oxidations. N-desmethylustiloxin F is then methylated by ustM to yield ustiloxin F which in turn substrate of the cytochrome P450 monooxygenase ustC which catalyzes the formation of S-deoxyustiloxin H. The flavoprotein monooxygenases ustF1 and ustF2 then participate in the modification of the side chain of S-deoxyustiloxin H, leading to the synthesis of an oxime intermediate, via ustiloxin H. Finally, carboxylative dehydration performed by the cysteine desulfurase-like protein ustD yields ustiloxin B. The polypeptide is Cysteine desulfurase-like protein ustD (Aspergillus flavus (strain ATCC 200026 / FGSC A1120 / IAM 13836 / NRRL 3357 / JCM 12722 / SRRC 167)).